The following is an 896-amino-acid chain: Zinc finger protein 574 (896 aa).

C2H2-type zinc fingers lie at residues 16–38 (YVCS…QNSH), 76–98 (YQCL…QELH), and 126–148 (YECV…RQTH). The residue at position 164 (serine 164) is a Phosphoserine. The segment at 214 to 236 (YKCSECSQLFQLPADFLEHQATH) adopts a C2H2-type 4 zinc-finger fold. The segment at 239–301 (APVPESQEPA…RARRNNSGEA (63 aa)) is disordered. The span at 247–257 (PALQQEVQASS) shows a compositional bias: polar residues. Residues 274 to 287 (HSYELRNGEAIGRD) are compositionally biased toward basic and acidic residues. At serine 298 the chain carries Phosphoserine. 4 consecutive C2H2-type zinc fingers follow at residues 309–331 (LFCS…LRSH), 336–358 (FKCP…LGDH), 364–386 (FLCV…RRAH), and 392–413 (HSCP…RRTH). Positions 434 to 460 (FPEPAPAETGEPEAPEPPVSEETSAGP) are disordered. 6 consecutive C2H2-type zinc fingers follow at residues 466 to 489 (YRCL…RFVH), 495 to 517 (HKCS…LRTH), 523 to 545 (FPCP…RLTH), 551 to 573 (YRCG…RLVH), 579 to 601 (YRCQ…RYHH), and 607 to 630 (YKCR…LVVH). The C2H2-type 15; degenerate zinc-finger motif lies at 636-659 (HRCPSCGAAFPSSLRLREHRCAAA). Residues 667–689 (FECGTCGKKVGSAARLQAHEAAH) form a C2H2-type 16 zinc finger. The disordered stretch occupies residues 687-733 (AAHAAAGPGEVLAKEPPAPRAPRATRAPVASPAGLGGTATASPAAPA). Residues 707 to 732 (APRATRAPVASPAGLGGTATASPAAP) show a composition bias toward low complexity. Serine 717 bears the Phosphoserine mark. Position 724 is a phosphothreonine (threonine 724). A Phosphoserine modification is found at serine 728. 4 consecutive C2H2-type zinc fingers follow at residues 738–760 (LECS…RRIH), 766–788 (YPCP…RRLH), 794–816 (FACE…RRIH), and 822–844 (YSCP…RKTH). Arginine 832 carries the asymmetric dimethylarginine modification.

It belongs to the krueppel C2H2-type zinc-finger protein family.

The protein localises to the nucleus. Functionally, may be involved in transcriptional regulation. The sequence is that of Zinc finger protein 574 (ZNF574) from Macaca fascicularis (Crab-eating macaque).